The sequence spans 211 residues: Protein-L-isoaspartate O-methyltransferase (211 aa).

Residue serine 62 is part of the active site.

This sequence belongs to the methyltransferase superfamily. L-isoaspartyl/D-aspartyl protein methyltransferase family.

It is found in the cytoplasm. It catalyses the reaction [protein]-L-isoaspartate + S-adenosyl-L-methionine = [protein]-L-isoaspartate alpha-methyl ester + S-adenosyl-L-homocysteine. Catalyzes the methyl esterification of L-isoaspartyl residues in peptides and proteins that result from spontaneous decomposition of normal L-aspartyl and L-asparaginyl residues. It plays a role in the repair and/or degradation of damaged proteins. This is Protein-L-isoaspartate O-methyltransferase from Shewanella pealeana (strain ATCC 700345 / ANG-SQ1).